Reading from the N-terminus, the 114-residue chain is Gas vesicle protein J1 (114 aa).

Residues 13–22 (LAEMLEMLLD) are alpha helix 1. Beta-strand regions lie at residues 25-35 (VVVNADIAVSV) and 40-50 (LLGIELRAAIA). The Conserved in GvpM1/2 but not GvpA signature appears at 46–50 (RAAIA). Alpha helix regions lie at residues 52 to 72 (FETAAEYGLEFPTGTDMERVE), 78 to 87 (SPDQSDPASE), and 95 to 105 (TNPLSDDSTPT). The segment at 63-114 (PTGTDMERVESAANISPDQSDPASETQSETESTNPLSDDSTPTASTSAEETK) is disordered. Positions 75 to 98 (ANISPDQSDPASETQSETESTNPL) are enriched in polar residues. A compositionally biased stretch (low complexity) spans 99 to 114 (SDDSTPTASTSAEETK).

The protein belongs to the gas vesicle GvpA family. In terms of assembly, gvpF to GvpM interact with each other in vitro, and may form multi-subunit complex(es). Interacts with GvpA1.

It is found in the gas vesicle. In terms of biological role, proteins GvpF to GvpM might be involved in nucleating gas vesicle formation. Mutagenesis of residues 13-61 shows that almost none of them can be substituted and still make gas vesicles. A minor component of the gas vesicle. Gas vesicles are hollow, gas filled proteinaceous nanostructures found in several microbial planktonic microorganisms. They allow positioning of halobacteria at the optimal depth for growth in the poorly aerated, shallow brine pools of their habitat. Its function is as follows. Expression of a 9.5 kb p-vac DNA fragment containing 2 divergently transcribed regions (gvpD-gvpE-gvpF-gvpG-gvpH-gvpI-gvpJ-gvpK-gvpL-gvpM and gvpA-gvpC-gvpN-gvpO) allows H.volcanii to produce gas vesicles. All site-directed mutagenesis is tested in H.volcanii. A minimal gas vesicle can be made in H.volcanii by gvpA1-gvpO1 plus gvpF1-gvpG1-gvpJ1-gvpK1-gvpL1-gvpM1; lack of enough GvpJ1 prevents formation. A similar region restores gas vesicle production in H.halobium without the p-vac locus, but it still has the c-vac locus. In Halobacterium salinarum (strain ATCC 700922 / JCM 11081 / NRC-1) (Halobacterium halobium), this protein is Gas vesicle protein J1 (gvpJ11).